Consider the following 212-residue polypeptide: ATP phosphoribosyltransferase (212 aa).

It belongs to the ATP phosphoribosyltransferase family. Short subfamily. In terms of assembly, heteromultimer composed of HisG and HisZ subunits.

The protein resides in the cytoplasm. The enzyme catalyses 1-(5-phospho-beta-D-ribosyl)-ATP + diphosphate = 5-phospho-alpha-D-ribose 1-diphosphate + ATP. Its pathway is amino-acid biosynthesis; L-histidine biosynthesis; L-histidine from 5-phospho-alpha-D-ribose 1-diphosphate: step 1/9. In terms of biological role, catalyzes the condensation of ATP and 5-phosphoribose 1-diphosphate to form N'-(5'-phosphoribosyl)-ATP (PR-ATP). Has a crucial role in the pathway because the rate of histidine biosynthesis seems to be controlled primarily by regulation of HisG enzymatic activity. The polypeptide is ATP phosphoribosyltransferase (Geobacter metallireducens (strain ATCC 53774 / DSM 7210 / GS-15)).